Consider the following 390-residue polypeptide: Dihydroorotase (390 aa).

Histidine 54 and histidine 56 together coordinate Zn(2+). Substrate is bound by residues 56–58 and asparagine 88; that span reads HIR. Positions 136, 160, 197, and 259 each coordinate Zn(2+). An N6-carboxylysine modification is found at lysine 136. The active site involves aspartate 259. Substrate contacts are provided by residues histidine 263 and 277–278; that span reads PG.

It belongs to the metallo-dependent hydrolases superfamily. DHOase family. Class I DHOase subfamily. It depends on Zn(2+) as a cofactor.

It carries out the reaction (S)-dihydroorotate + H2O = N-carbamoyl-L-aspartate + H(+). Its pathway is pyrimidine metabolism; UMP biosynthesis via de novo pathway; (S)-dihydroorotate from bicarbonate: step 3/3. Its function is as follows. Catalyzes the reversible cyclization of carbamoyl aspartate to dihydroorotate. The protein is Dihydroorotase of Saccharolobus solfataricus (strain ATCC 35092 / DSM 1617 / JCM 11322 / P2) (Sulfolobus solfataricus).